A 156-amino-acid polypeptide reads, in one-letter code: Small ribosomal subunit protein uS7 (156 aa).

It belongs to the universal ribosomal protein uS7 family. In terms of assembly, part of the 30S ribosomal subunit. Contacts proteins S9 and S11.

Functionally, one of the primary rRNA binding proteins, it binds directly to 16S rRNA where it nucleates assembly of the head domain of the 30S subunit. Is located at the subunit interface close to the decoding center, probably blocks exit of the E-site tRNA. The polypeptide is Small ribosomal subunit protein uS7 (Shewanella woodyi (strain ATCC 51908 / MS32)).